The primary structure comprises 304 residues: Solute carrier family 25 member 34 (304 aa).

3 Solcar repeats span residues 4 to 97 (VPPA…ACQA), 101 to 194 (QQPG…AKAW), and 204 to 295 (DSWL…LRKL). 6 helical membrane passes run 7-27 (AVDLVLGASACCLACVFTNPL), 45-65 (TYPRLYRGFVASVVAVVRADG), 98-120 (GLSQQPGGTVVAGAVAGALGAFV), 170-191 (VGGAVPRVMVGSAAQLATFASA), 206-226 (WLVALAGGMISSIAVVAVMTP), and 278-301 (LGPHTILSMLFWDELRKLAGWGQH).

Belongs to the mitochondrial carrier (TC 2.A.29) family.

Its subcellular location is the mitochondrion inner membrane. It catalyses the reaction a dicarboxylate(in) + sulfate(out) = a dicarboxylate(out) + sulfate(in). Putative antiporter that exchanges dicarboxylates and sulfur oxoanions across the inner membrane of mitochondria. This Bos taurus (Bovine) protein is Solute carrier family 25 member 34 (SLC25A34).